The chain runs to 189 residues: Interferon alpha-1 (189 aa).

An N-terminal signal peptide occupies residues 1-23 (MAPAWSLLLALLLLSCNAICSLG). Intrachain disulfides connect Cys24/Cys122 and Cys52/Cys162.

Belongs to the alpha/beta interferon family. As to quaternary structure, interacts with CR2.

It localises to the secreted. Functionally, produced by macrophages, IFN-alpha have antiviral activities. Interferon stimulates the production of two enzymes: a protein kinase and an oligoadenylate synthetase. This chain is Interferon alpha-1, found in Bos taurus (Bovine).